Consider the following 1071-residue polypeptide: Fused isobutyryl-CoA mutase (1071 aa).

The 138-residue stretch at 12 to 149 (PVRFVTSAAL…QTCDVDLTGE (138 aa)) folds into the B12-binding domain. His25 is an adenosylcob(III)alamin binding site. The tract at residues 153-400 (VEAVLAGERT…YQHLLELLGA (248 aa)) is GTPase chaperone MeaI. 203–208 (GSGKSS) contacts GTP. Mg(2+) is bound by residues Ser207, Val232, Asp233, and Asp246. Residue Arg249 coordinates GTP. The Mg(2+) site is built by Glu293 and Thr294. 340–343 (NKFE) contributes to the GTP binding site. The tract at residues 401–558 (RGLPVDEGVL…RSENLPGHFP (158 aa)) is linker. The substrate site is built by Phe566, Arg601, Arg707, Tyr751, Ser800, Arg835, and Lys840. GTP contacts are provided by Glu952 and Asn1070.

It belongs to the IcmF family. In terms of assembly, homodimer. Adenosylcob(III)alamin serves as cofactor. It depends on Mg(2+) as a cofactor.

The enzyme catalyses 2-methylpropanoyl-CoA = butanoyl-CoA. The catalysed reaction is GTP + H2O = GDP + phosphate + H(+). Catalyzes the reversible interconversion of isobutyryl-CoA and n-butyryl-CoA, using radical chemistry. Also exhibits GTPase activity, associated with its G-protein domain (MeaI) that functions as a chaperone that assists cofactor delivery and proper holo-enzyme assembly. Does not exhibit methylmalonyl-CoA mutase (MCM) activity. This Nocardia farcinica (strain IFM 10152) protein is Fused isobutyryl-CoA mutase.